Consider the following 151-residue polypeptide: Small ribosomal subunit protein uS15 (151 aa).

The protein belongs to the universal ribosomal protein uS15 family. In terms of assembly, component of the small ribosomal subunit. Mature ribosomes consist of a small (40S) and a large (60S) subunit. The 40S subunit contains about 32 different proteins and 1 molecule of RNA (18S). The 60S subunit contains 45 different proteins and 3 molecules of RNA (25S, 5.8S and 5S).

The protein localises to the cytoplasm. Its function is as follows. Component of the ribosome, a large ribonucleoprotein complex responsible for the synthesis of proteins in the cell. The small ribosomal subunit (SSU) binds messenger RNAs (mRNAs) and translates the encoded message by selecting cognate aminoacyl-transfer RNA (tRNA) molecules. The large subunit (LSU) contains the ribosomal catalytic site termed the peptidyl transferase center (PTC), which catalyzes the formation of peptide bonds, thereby polymerizing the amino acids delivered by tRNAs into a polypeptide chain. The nascent polypeptides leave the ribosome through a tunnel in the LSU and interact with protein factors that function in enzymatic processing, targeting, and the membrane insertion of nascent chains at the exit of the ribosomal tunnel. The protein is Small ribosomal subunit protein uS15 (RPS13) of Candida albicans (strain SC5314 / ATCC MYA-2876) (Yeast).